We begin with the raw amino-acid sequence, 809 residues long: WD repeat protein iqw1 (809 aa).

WD repeat units lie at residues 43–82 (GHTG…KPRH), 87–128 (GHVQ…EGGM), 141–180 (CALD…VCNQ), 193–233 (PYRI…KSFR), and 241–295 (SPEK…LFHV). Positions 599 to 644 (SMYTGHSDLNDDDDDYQDEESYSYASDDDDESDEDSDEGPTLLSLR) are disordered. Residues 608–636 (NDDDDDYQDEESYSYASDDDDESDEDSDE) show a composition bias toward acidic residues. WD repeat units lie at residues 668–708 (CNVE…ILAI) and 711–750 (GDSE…PSGC).

Interacts with ddb1.

It is found in the cytoplasm. In terms of biological role, ligand-dependent coactivator of nuclear receptors that may function as a substrate receptor for CUL4-DDB1 E3 ubiquitin-protein ligase complex. This Schizosaccharomyces pombe (strain 972 / ATCC 24843) (Fission yeast) protein is WD repeat protein iqw1 (iqw1).